The following is a 400-amino-acid chain: Protein phosphatase methylesterase 1 (400 aa).

The segment at 1-72 (MSDLQRTWAK…NQKLFARPQG (72 aa)) is disordered. Over residues 19-28 (PFDEPQEEQG) the composition is skewed to acidic residues. Positions 44-54 (SSASSASSVSS) are enriched in low complexity. Positions 55–64 (TGTIIPSPNQ) are enriched in polar residues. Catalysis depends on residues Ser202, Asp228, and His358.

The protein belongs to the AB hydrolase superfamily.

It carries out the reaction [phosphatase 2A protein]-C-terminal L-leucine methyl ester + H2O = [phosphatase 2A protein]-C-terminal L-leucine + methanol + H(+). Its function is as follows. Demethylates proteins that have been reversibly carboxymethylated. Demethylates the phosphatase PP2A catalytic subunit. This is Protein phosphatase methylesterase 1 (PPE1) from Gibberella zeae (strain ATCC MYA-4620 / CBS 123657 / FGSC 9075 / NRRL 31084 / PH-1) (Wheat head blight fungus).